The sequence spans 118 residues: V-type proton ATPase subunit G 2 (118 aa).

The tract at residues 26 to 90 (RKRKARRLKQ…VQGMQSSQQR (65 aa)) is disordered. A compositionally biased stretch (basic and acidic residues) spans 35–55 (QAKEEAQMEVEQYRREREQEF). Polar residues-rich tracts occupy residues 56–69 (QSKQQAAMGSQGNL) and 78–89 (RRQVQGMQSSQQ).

The protein belongs to the V-ATPase G subunit family. As to quaternary structure, V-ATPase is a heteromultimeric enzyme made up of two complexes: the ATP-hydrolytic V1 complex and the proton translocation V0 complex. The V1 complex consists of three catalytic AB heterodimers that form a heterohexamer, three peripheral stalks each consisting of EG heterodimers, one central rotor including subunits D and F, and the regulatory subunits C and H. The proton translocation complex V0 consists of the proton transport subunit a, a ring of proteolipid subunits c9c'', rotary subunit d, subunits e and f, and the accessory subunits ATP6AP1/Ac45 and ATP6AP2/PRR.

The protein localises to the melanosome. Its subcellular location is the cytoplasmic vesicle. It localises to the clathrin-coated vesicle membrane. Its function is as follows. Subunit of the V1 complex of vacuolar(H+)-ATPase (V-ATPase), a multisubunit enzyme composed of a peripheral complex (V1) that hydrolyzes ATP and a membrane integral complex (V0) that translocates protons. V-ATPase is responsible for acidifying and maintaining the pH of intracellular compartments and in some cell types, is targeted to the plasma membrane, where it is responsible for acidifying the extracellular environment. The protein is V-type proton ATPase subunit G 2 (ATP6V1G2) of Sus scrofa (Pig).